The following is a 421-amino-acid chain: Nuclear speckle RNA-binding protein B (421 aa).

3 disordered regions span residues 1 to 64, 86 to 114, and 197 to 226; these read MDNR…VNIY, TGQT…MVDT, and TDPQ…GIPH. Residues 33–44 are compositionally biased toward pro residues; the sequence is PLAPPHPQPQPP. The span at 89–103 shows a compositional bias: low complexity; sequence TSTSTTSSSSSSSTS. One can recognise an RRM domain in the interval 323 to 409; the sequence is NTLYVEGLPS…KILRLQFFRN (87 aa).

As to expression, isoform 1: Expressed in root meristems, lateral root primordia, root vascular tissues and cotyledon vascular tissues. Isoform 2: Expressed in root meristems, lateral root primordia and root vascular tissues.

The protein localises to the nucleus speckle. Functionally, alternative splicing (AS) regulator that binds to specific mRNAs and modulates auxin effects on the transcriptome. Displaced from its targets upon binding to AS competitor long non-coding RNA (ASCO-RNA). This chain is Nuclear speckle RNA-binding protein B, found in Arabidopsis thaliana (Mouse-ear cress).